A 703-amino-acid chain; its full sequence is MSSFLDILGDGHVNFEKCGDVVVSPKDNMVAMFCHFCKDIFTHLPEFMRHLQWSHSDVLQFTKEQNVYRVEELMSLETSEDDVQSQANSCSSGDSGLAGEMEDADGEPGSSECLANNLEIMNALAAFDVDVDGLNNVSHEQSYSKTPPDSRTEGFRCARKPGRVEKPPSICDLKSYNITRHSRKREAIKQRLSSVKKRIMRSLENDVISPRLNKLRSKLNNSLSSNISGPPKQSKMPSLLENSSVNELPAVLESTNPPNFDSEQPYVVSTTIKPSIRPCPSRTAVKTDRNISHQPVARRSTVNIERVDILPPINIKQKMKMSAKDIPFWESIIISSVASQQPSELNTTNNAVDQPPKRPERRSSLTVISSSPIQAMKPMRRSSMTRENTSPESSGILRSGEVESPAKANKRTKDSFEETSSSNEKGNAKRSKLEQNRCSMNFSLSASVTEYIRSDLKTSKLDLDSILRLAEPLESDYFKNTIVEDQVKNATKMGSPQKEFTKLQIGVKPEMEALKEDLRLLKTVGLLVLKDSCFEDKLPFEQSESFRKTAAKFSKIYHTYDTIWSYRKTKTIGVHQRLTEQLNSFTEEVNREIDCHLTTNEIKRILNLINSWYAYQIDQRFFRKATLSYSVEHYMFLFHFLPKINPTVYFCECCEEIFPNEARYKKHVQSVHAVHAFTCSECGKSFKRLYFYEKHLKTVHLKP.

The C2H2-type 1 zinc-finger motif lies at 32–55 (MFCHFCKDIFTHLPEFMRHLQWSH). Disordered regions lie at residues 78 to 111 (TSEDDVQSQANSCSSGDSGLAGEMEDADGEPGSS), 138 to 161 (SHEQSYSKTPPDSRTEGFRCARKP), and 339 to 434 (SQQP…SKLE). 2 stretches are compositionally biased toward polar residues: residues 84–94 (QSQANSCSSGD) and 138–147 (SHEQSYSKTP). Positions 148–161 (PDSRTEGFRCARKP) are enriched in basic and acidic residues. Polar residues-rich tracts occupy residues 339-352 (SQQPSELNTTNNAV) and 364-373 (SLTVISSSPI). C2H2-type zinc fingers lie at residues 649-672 (YFCECCEEIFPNEARYKKHVQSVH) and 677-700 (FTCSECGKSFKRLYFYEKHLKTVH).

This sequence belongs to the Teflon family.

Its subcellular location is the nucleus. The protein localises to the chromosome. Specifically required in males for proper segregation of autosomal bivalents at meiosis I. Expression is required in the male germ line prior to spermatocyte stage S4. May have a role as a bridging molecule maintaining adhesion to hold autosome bivalents together via heterochromatic connections. The polypeptide is Protein teflon (Drosophila pseudoobscura pseudoobscura (Fruit fly)).